The chain runs to 371 residues: Phospho-N-acetylmuramoyl-pentapeptide-transferase (371 aa).

Transmembrane regions (helical) follow at residues 25–45 (YLTF…VAMG), 79–99 (TMGG…FADL), 104–124 (VWVV…DDYA), 139–159 (KLIA…IFAP), 179–199 (LVIN…AGFS), 210–230 (GLAI…AYLV), 247–267 (VGEL…FLWY), 274–294 (IFMG…IAVC), 299–319 (LVLG…MIQV), and 348–368 (TVVI…LATL).

It belongs to the glycosyltransferase 4 family. MraY subfamily. It depends on Mg(2+) as a cofactor.

It is found in the cell inner membrane. The catalysed reaction is UDP-N-acetyl-alpha-D-muramoyl-L-alanyl-gamma-D-glutamyl-meso-2,6-diaminopimeloyl-D-alanyl-D-alanine + di-trans,octa-cis-undecaprenyl phosphate = di-trans,octa-cis-undecaprenyl diphospho-N-acetyl-alpha-D-muramoyl-L-alanyl-D-glutamyl-meso-2,6-diaminopimeloyl-D-alanyl-D-alanine + UMP. The protein operates within cell wall biogenesis; peptidoglycan biosynthesis. Catalyzes the initial step of the lipid cycle reactions in the biosynthesis of the cell wall peptidoglycan: transfers peptidoglycan precursor phospho-MurNAc-pentapeptide from UDP-MurNAc-pentapeptide onto the lipid carrier undecaprenyl phosphate, yielding undecaprenyl-pyrophosphoryl-MurNAc-pentapeptide, known as lipid I. In Caulobacter sp. (strain K31), this protein is Phospho-N-acetylmuramoyl-pentapeptide-transferase.